Consider the following 249-residue polypeptide: MSRLWLIVPAAGQGRRMGAECPKQYLDIAGRPVLAHTLARLHEAFPEAALRLCLDPDDTRFSPEWVPFADWQRVAGGRERVDSVENALASLADVAADDDLVLVHDVARPCVAVEDLRRLREALTTSPEGGLLAAPVADTMKRADARGHVVHTVSREGLWHAMTPQGAPYRVLCRAFAHARGAGVVLTDEASALEAWGLAPRLVPGRRDNLKITHPEDLALATRLLAGDPASRRATGALSDDSLADEARS.

It belongs to the IspD/TarI cytidylyltransferase family. IspD subfamily.

The enzyme catalyses 2-C-methyl-D-erythritol 4-phosphate + CTP + H(+) = 4-CDP-2-C-methyl-D-erythritol + diphosphate. It functions in the pathway isoprenoid biosynthesis; isopentenyl diphosphate biosynthesis via DXP pathway; isopentenyl diphosphate from 1-deoxy-D-xylulose 5-phosphate: step 2/6. Its function is as follows. Catalyzes the formation of 4-diphosphocytidyl-2-C-methyl-D-erythritol from CTP and 2-C-methyl-D-erythritol 4-phosphate (MEP). The protein is 2-C-methyl-D-erythritol 4-phosphate cytidylyltransferase of Chromohalobacter salexigens (strain ATCC BAA-138 / DSM 3043 / CIP 106854 / NCIMB 13768 / 1H11).